Reading from the N-terminus, the 598-residue chain is Elongation factor 4 (598 aa).

A tr-type G domain is found at 4 to 186 (SHIRNFSIIA…VIVNKIPPPE (183 aa)). GTP is bound by residues 16-21 (DHGKST) and 133-136 (NKID).

Belongs to the TRAFAC class translation factor GTPase superfamily. Classic translation factor GTPase family. LepA subfamily.

Its subcellular location is the cell inner membrane. It carries out the reaction GTP + H2O = GDP + phosphate + H(+). Its function is as follows. Required for accurate and efficient protein synthesis under certain stress conditions. May act as a fidelity factor of the translation reaction, by catalyzing a one-codon backward translocation of tRNAs on improperly translocated ribosomes. Back-translocation proceeds from a post-translocation (POST) complex to a pre-translocation (PRE) complex, thus giving elongation factor G a second chance to translocate the tRNAs correctly. Binds to ribosomes in a GTP-dependent manner. The sequence is that of Elongation factor 4 from Alteromonas mediterranea (strain DSM 17117 / CIP 110805 / LMG 28347 / Deep ecotype).